Here is a 1026-residue protein sequence, read N- to C-terminus: Multidrug resistance protein MdtC (1026 aa).

The next 11 membrane-spanning stretches (helical) occupy residues 15–35 (ILIA…LPVA), 333–353 (EVEE…FLFL), 360–380 (LIPA…MYLC), 387–407 (LSLM…IVVL), 431–451 (VGFT…PLLL), 463–483 (FAVT…TLTP), 528–548 (LVGV…IAIP), 853–873 (LILI…LYES), 897–917 (LFNA…IGIV), 953–973 (PIMM…LSGG), and 984–1004 (ITIV…TPVV).

The protein belongs to the resistance-nodulation-cell division (RND) (TC 2.A.6) family. MdtC subfamily. In terms of assembly, part of a tripartite efflux system composed of MdtA, MdtB and MdtC. MdtC forms a heteromultimer with MdtB.

It is found in the cell inner membrane. The polypeptide is Multidrug resistance protein MdtC (Salmonella choleraesuis (strain SC-B67)).